The following is a 508-amino-acid chain: MDEGSEVSTDGNSLIKAVHQSRLRLTRLLLEGGAYINESNDRGETPLMIACKTKHVDQQSVGRAKMVKYLLENSADPNIQDKSGKSALMHACLERAGPEVVSLLLKSGADLSLQDHSGYSALVYAINAEDRDTLKVLLSACQAKGKEVIIITTAKSPSGRHTTQHHLNMPPADMDGSHPPATPSEIDIKTASLPLSYSSETDLTLFGFKDKELCGGSDNTWDPDSPPRKPVIATNGPKLSQAPAWIKSTPSLKHQARVASLQEELQDITPEEEIAYKTNALALSKRFITRHQSIDVKDTAHLLRAFDQVNSRKMSYDEINYHSLFPEGSQTSVEIPTDRDPDSNQIFASTLKSIVQKRNSGANHYSSDSQLAEGVTPPTVEDGKAAKKKIFAPSPSLLSGSKELVEPAPPGPLSRRNHAVLERRGSGAFPLDHSLAQSRPGFLPPLNVNPHPPITDIGVNNKICGLLSCGQKALMPTAPIFPKEFKTKKMLLRRQSLQTEQIKQLVNF.

ANK repeat units lie at residues 9–38, 42–79, 83–113, and 117–146; these read TDGN…YINE, RGET…DPNI, SGKS…DLSL, and SGYS…AKGK. Positions 157-185 are disordered; sequence PSGRHTTQHHLNMPPADMDGSHPPATPSE. S260 is modified (phosphoserine). Phosphothreonine is present on T269. The residue at position 293 (S293) is a Phosphoserine. Residues 361-370 show a composition bias toward polar residues; that stretch reads GANHYSSDSQ. The disordered stretch occupies residues 361–380; it reads GANHYSSDSQLAEGVTPPTV.

This sequence belongs to the ANKRD34 family. Post-translationally, phosphorylated. In terms of tissue distribution, specifically and constitutively expressed in brain (at protein level).

It localises to the cytoplasm. The protein localises to the nucleus. The polypeptide is Ankyrin repeat domain-containing protein 34B (Ankrd34b) (Mus musculus (Mouse)).